Reading from the N-terminus, the 409-residue chain is Tryptophan synthase beta chain (409 aa).

Lys-95 bears the N6-(pyridoxal phosphate)lysine mark.

Belongs to the TrpB family. As to quaternary structure, tetramer of two alpha and two beta chains. Pyridoxal 5'-phosphate serves as cofactor.

The catalysed reaction is (1S,2R)-1-C-(indol-3-yl)glycerol 3-phosphate + L-serine = D-glyceraldehyde 3-phosphate + L-tryptophan + H2O. It functions in the pathway amino-acid biosynthesis; L-tryptophan biosynthesis; L-tryptophan from chorismate: step 5/5. Its function is as follows. The beta subunit is responsible for the synthesis of L-tryptophan from indole and L-serine. The polypeptide is Tryptophan synthase beta chain (Pseudomonas syringae pv. syringae (strain B728a)).